We begin with the raw amino-acid sequence, 510 residues long: MTGEKIRSLHKDQKPSKDEDLLEPDEEATAGGTFTRTGKLKSSKMFSNHKVIRSPSNPALLQNHHHQQISPITPGESKSDVYFPVHECVLKGDIRRLSSLIRSHSIGQKDSHGNTPLHLAVMLGNKECAHLLLAHNAPVKVKNAQGWSPLAEAISYGDRQMITALLRKLKQQSRESVEEKRPRLLKALKELGDFYLELHWDFQSWVPLLSRILPSDACKIYKQGINIRLDTTLIDFTDMKCQRGDLSFIFNGDAAPSESFVVLDNEQKVYQRIHHEESEMETEEEVDILMSSDIYSATLSTKSITFTRAQTGWLFREDKTERVGNFLADFYLVNGLILESRKRREHLTEEDILRNKAIMESLSKGGNLMEQNFEPVRRQSLTPPPPNTITWEEYISAENGKAPHLGRELVCKENKKTFKATIAMSQDFPLGIESLLNVLEVIAPFKHFNKLREFVQMKLPPGFPVKLDIPVFPTITATVTFQEFRYGEFEDAIFTIPDDYKEDPSRFPDL.

Positions 1–19 are enriched in basic and acidic residues; sequence MTGEKIRSLHKDQKPSKDE. The tract at residues 1–35 is disordered; sequence MTGEKIRSLHKDQKPSKDEDLLEPDEEATAGGTFT. ANK repeat units follow at residues 80–111, 112–141, and 145–174; these read DVYF…QKDS, HGNT…PVKV, and QGWS…QQSR.

The protein resides in the endoplasmic reticulum membrane. Its function is as follows. Acts as a molecular chaperone for G protein-coupled receptors, regulating their biogenesis and exit from the ER. This chain is Ankyrin repeat domain-containing protein 13C-A (ankrd13c-a), found in Xenopus laevis (African clawed frog).